Reading from the N-terminus, the 291-residue chain is Bifunctional protein FolD (291 aa).

NADP(+)-binding positions include 168 to 170 (GRG), threonine 195, and isoleucine 236.

Belongs to the tetrahydrofolate dehydrogenase/cyclohydrolase family. In terms of assembly, homodimer.

The catalysed reaction is (6R)-5,10-methylene-5,6,7,8-tetrahydrofolate + NADP(+) = (6R)-5,10-methenyltetrahydrofolate + NADPH. It catalyses the reaction (6R)-5,10-methenyltetrahydrofolate + H2O = (6R)-10-formyltetrahydrofolate + H(+). The protein operates within one-carbon metabolism; tetrahydrofolate interconversion. In terms of biological role, catalyzes the oxidation of 5,10-methylenetetrahydrofolate to 5,10-methenyltetrahydrofolate and then the hydrolysis of 5,10-methenyltetrahydrofolate to 10-formyltetrahydrofolate. This Bifidobacterium longum subsp. infantis (strain ATCC 15697 / DSM 20088 / JCM 1222 / NCTC 11817 / S12) protein is Bifunctional protein FolD.